Here is a 478-residue protein sequence, read N- to C-terminus: Nuclear distribution protein PAC1 (478 aa).

The LisH domain maps to 9 to 41 (QAEELHKAMIAYLLSANLPKSAAALREELADSV). Residues 60-87 (TSVVRLQKKIMDLESRNNALQSELDSAT) are a coiled coil. WD repeat units lie at residues 113–154 (SHRE…RTIK), 156–196 (HTKA…KNIR), 200–247 (GHDH…CVKT), 250–289 (GHVDWVRDVVASPDGRFLFSAGNDQVARLWDVSSGETKST), 292–352 (GHEH…IKTL), 354–393 (GHDNWVRALAFHPGGKYLLSVSDDKTLRCWDLTQECKCVR), 398–439 (AHGH…GASA), and 440–477 (INGVVPTGKKEDPGGGPMMGIRCVIATGSVDLKVRVFA).

It belongs to the WD repeat LIS1/nudF family. As to quaternary structure, self-associates. Interacts with NDL1 and dynein.

Its subcellular location is the cytoplasm. The protein resides in the cytoskeleton. The protein localises to the spindle pole. Its function is as follows. Positively regulates the activity of the minus-end directed microtubule motor protein dynein. May enhance dynein-mediated microtubule sliding by targeting dynein to the microtubule plus end. Required for nuclear migration during vegetative growth as well as development. Required for retrograde early endosome (EE) transport from the hyphal tip. Required for localization of dynein to the mitotic spindle poles. Recruits additional proteins to the dynein complex at SPBs. This Paracoccidioides brasiliensis (strain Pb03) protein is Nuclear distribution protein PAC1.